The following is a 507-amino-acid chain: Alkyl hydroperoxide reductase subunit F (507 aa).

FAD is bound at residue 207-222; it reads DVLIVGGGPASGSAAI. Cysteines 335 and 338 form a disulfide. 347-361 contributes to the NAD(+) binding site; that stretch reads DVAVIGGGNSGVEAA. Residue 467–477 participates in FAD binding; sequence TNVPGIFAAGD.

It belongs to the class-II pyridine nucleotide-disulfide oxidoreductase family. Homodimer. FAD is required as a cofactor.

Functionally, serves to protect the cell against DNA damage by alkyl hydroperoxides. It can use either NADH or NADPH as electron donor for direct reduction of redox dyes or of alkyl hydroperoxides when combined with the AhpC protein. The chain is Alkyl hydroperoxide reductase subunit F (ahpF) from Staphylococcus aureus (strain MSSA476).